We begin with the raw amino-acid sequence, 340 residues long: Fructose-1,6-bisphosphatase class 1 (340 aa).

Mg(2+) contacts are provided by Glu-107, Asp-126, Leu-128, and Asp-129. Asn-215 serves as a coordination point for substrate. Residue Glu-287 coordinates Mg(2+).

The protein belongs to the FBPase class 1 family. As to quaternary structure, homotetramer. Requires Mg(2+) as cofactor.

The protein localises to the cytoplasm. It catalyses the reaction beta-D-fructose 1,6-bisphosphate + H2O = beta-D-fructose 6-phosphate + phosphate. It functions in the pathway carbohydrate biosynthesis; gluconeogenesis. This chain is Fructose-1,6-bisphosphatase class 1, found in Brucella suis biovar 1 (strain 1330).